Here is a 241-residue protein sequence, read N- to C-terminus: 1-(5-phosphoribosyl)-5-[(5-phosphoribosylamino)methylideneamino] imidazole-4-carboxamide isomerase (241 aa).

Residue Asp8 is the Proton acceptor of the active site. Catalysis depends on Asp127, which acts as the Proton donor.

The protein belongs to the HisA/HisF family.

It localises to the cytoplasm. It catalyses the reaction 1-(5-phospho-beta-D-ribosyl)-5-[(5-phospho-beta-D-ribosylamino)methylideneamino]imidazole-4-carboxamide = 5-[(5-phospho-1-deoxy-D-ribulos-1-ylimino)methylamino]-1-(5-phospho-beta-D-ribosyl)imidazole-4-carboxamide. Its pathway is amino-acid biosynthesis; L-histidine biosynthesis; L-histidine from 5-phospho-alpha-D-ribose 1-diphosphate: step 4/9. The polypeptide is 1-(5-phosphoribosyl)-5-[(5-phosphoribosylamino)methylideneamino] imidazole-4-carboxamide isomerase (Thermotoga petrophila (strain ATCC BAA-488 / DSM 13995 / JCM 10881 / RKU-1)).